Here is a 577-residue protein sequence, read N- to C-terminus: Pentatricopeptide repeat-containing protein At2g01390 (577 aa).

PPR repeat units lie at residues 121–155, 156–190, 191–225, 226–260, 261–295, 382–416, 417–451, 452–482, 485–519, and 520–554; these read DHFT…GVLI, DTVT…GCEP, TVVS…RVSP, NCHT…GVQP, DKAA…GVVL, DSFV…GIHL, KKSA…QHSL, GCYQ…LPDD, GVAA…EIMP, and SLGT…LVAS.

Belongs to the PPR family. P subfamily.

The chain is Pentatricopeptide repeat-containing protein At2g01390 from Arabidopsis thaliana (Mouse-ear cress).